The sequence spans 248 residues: MTLPGEQHLHKIQFYATTAYSCGYLADKPAQSLIATPHHLIDAHAYSGLIQLGFRRSGKFAYRPHCETCHACIPVRLPVAEFQPSRSQRRAWKQHRNLSVALIELAFSEEHFALYSAYQAARHEGSSEDPETVEQYRNFLVQSNVESLMVEFRENGVLKMVSVVDIVRDGISAVYTFYDTADKHASYGTYNILWLLDWCGSLNLPYLYLGYWIKESRKMAYKQNFLPQEGLIDGEWRPIHTERYAQPK.

It belongs to the R-transferase family. Bpt subfamily.

It localises to the cytoplasm. It catalyses the reaction N-terminal L-glutamyl-[protein] + L-leucyl-tRNA(Leu) = N-terminal L-leucyl-L-glutamyl-[protein] + tRNA(Leu) + H(+). The catalysed reaction is N-terminal L-aspartyl-[protein] + L-leucyl-tRNA(Leu) = N-terminal L-leucyl-L-aspartyl-[protein] + tRNA(Leu) + H(+). Functionally, functions in the N-end rule pathway of protein degradation where it conjugates Leu from its aminoacyl-tRNA to the N-termini of proteins containing an N-terminal aspartate or glutamate. The polypeptide is Aspartate/glutamate leucyltransferase (Methylobacillus flagellatus (strain ATCC 51484 / DSM 6875 / VKM B-1610 / KT)).